The sequence spans 177 residues: MRRPFKADAPVKEGPRANKEIRVPRVQLIDAEQNLGSIPIDQALRMADEAGLDLVEIAPNSDPPVCKILDLGKLKYANQKKAAEARKKQKIVEIKEIKMRPNIDTHDYEVKMKAMNRFFEEGDKVKVTLKFRGREMAHQELGMKLLMQVKDDTQEIAKVEAEPKLEGRQMMMVLAPK.

It belongs to the IF-3 family. As to quaternary structure, monomer.

Its subcellular location is the cytoplasm. In terms of biological role, IF-3 binds to the 30S ribosomal subunit and shifts the equilibrium between 70S ribosomes and their 50S and 30S subunits in favor of the free subunits, thus enhancing the availability of 30S subunits on which protein synthesis initiation begins. The sequence is that of Translation initiation factor IF-3 from Rhizobium meliloti (strain 1021) (Ensifer meliloti).